Here is a 624-residue protein sequence, read N- to C-terminus: MPDKQKQLRVISLFEHMTSINTPLPRDQIDARLHHLGRLPQGELFSCFHEEDLEEATELYKILYTAKDFDEVINLAKQSRTFVNEGLFVYAVSVALLHRDDCKGIVVPAIQEIFPDRFVPTETINLAVKEAANHPDQDISVHVVETGNILDEEYKLAYFKEDVGTNAHHWHWHIVYPATWDPAFMGRMKDRKGELFYYMHQQMCARYDCERLSNGMRRMIPFSNFDEKLEGYSAHLTSLVSGLPYAFRPDGLCLHDLKDIDLKEMFRWRERILDAIDSGYYIDNEGHQVKLDIVDGINVLGALIESSFETKNKLYYGSLHNWGHVMMARLQDPDHRFNENPGVMSDTSTSLRDPIFYRYHRFIDNIFQKYIATLPHYTPEDLTCPGVHVVNVTVNAKVPNVVTTFMKEAELELSYGIDFGSDHSVKVLYRHLDHEPFTYNISVENSSGGAKDVTMRIFLGPKYDELGNRLQPEQQRTLNIELDKFKATLDPGKNVVTRDHRNSTVTVEQSVPVKKLREEGGVAGEYCSCGWPEHMLIPKGNHRGMDFELFVIVTDYAQDAVNGHGENAECVDAVSYCGAKDQKYPDKKPMGFPFDRVIEGLTFEEFLTVSMSCTDVRIKYTDIK.

The Cu cation site is built by His169, His173, His200, His320, His324, and His360. A glycan (N-linked (GlcNAc...) asparagine) is linked at Asn445. A disulfide bridge connects residues Cys529 and Cys577.

It belongs to the tyrosinase family. Hemocyanin subfamily. Tarantula hemocyanin is a 24-chain polymer with seven different chains identified. In terms of tissue distribution, hemolymph.

It localises to the secreted. The protein localises to the extracellular space. Its function is as follows. Hemocyanins are copper-containing oxygen carriers occurring freely dissolved in the hemolymph of many mollusks and arthropods. The chain is Hemocyanin E chain (HCE) from Aphonopelma sp. (American tarantula).